We begin with the raw amino-acid sequence, 542 residues long: Putative ankyrin repeat protein FPV115 (542 aa).

8 ANK repeats span residues 33–62, 157–186, 218–247, 251–281, 285–314, 316–345, 347–375, and 378–407; these read FRNLPLHYAIYSRRKDIVETLLKSGYDPNS, DGLLPLYHAAAAGNTEMVELLLSYGAKTNL, NDINNILKTIQLYNADMLLFLIEIGLDINT, KGKTALHYACNSINCIETVKEIMKYGADINV, EGLTPLHSACKYGDLKLSKLLIEYGADVKV, TTSTVLNLAVESGNVELVKFLIEKNPEFIT, DYLSLSLAIRCKDINIVLLLLDAGMDVNS, and CISTPLHLGVILGNSNIVKLLLDHGANINA.

This chain is Putative ankyrin repeat protein FPV115, found in Fowlpox virus (strain NVSL) (FPV).